A 303-amino-acid polypeptide reads, in one-letter code: Glutamyl-Q tRNA(Asp) synthetase (303 aa).

Residues 9 to 13 and glutamate 45 each bind L-glutamate; that span reads RFAPS. A 'HIGH' region motif is present at residues 12-22; that stretch reads PSPTGAMHLGN. 4 residues coordinate Zn(2+): cysteine 100, cysteine 102, tyrosine 125, and cysteine 129. Residues tyrosine 184 and arginine 202 each contribute to the L-glutamate site. Residues 240–244 carry the 'KMSKS' region motif; it reads RLAKR. ATP is bound at residue lysine 243.

The protein belongs to the class-I aminoacyl-tRNA synthetase family. GluQ subfamily. Requires Zn(2+) as cofactor.

Catalyzes the tRNA-independent activation of glutamate in presence of ATP and the subsequent transfer of glutamate onto a tRNA(Asp). Glutamate is transferred on the 2-amino-5-(4,5-dihydroxy-2-cyclopenten-1-yl) moiety of the queuosine in the wobble position of the QUC anticodon. This chain is Glutamyl-Q tRNA(Asp) synthetase, found in Deinococcus geothermalis (strain DSM 11300 / CIP 105573 / AG-3a).